The following is a 437-amino-acid chain: Glutamyl-tRNA reductase (437 aa).

Substrate is bound by residues 46 to 49 (TCNR), S111, 116 to 118 (ERE), and Q122. Catalysis depends on C47, which acts as the Nucleophile. An NADP(+)-binding site is contributed by 192–197 (GTGAYA). Positions 413-437 (PDVPEETAPSTRQDPSDTPRPRAVG) are disordered. The span at 426–437 (DPSDTPRPRAVG) shows a compositional bias: basic and acidic residues.

It belongs to the glutamyl-tRNA reductase family. As to quaternary structure, homodimer.

It carries out the reaction (S)-4-amino-5-oxopentanoate + tRNA(Glu) + NADP(+) = L-glutamyl-tRNA(Glu) + NADPH + H(+). The protein operates within porphyrin-containing compound metabolism; protoporphyrin-IX biosynthesis; 5-aminolevulinate from L-glutamyl-tRNA(Glu): step 1/2. Catalyzes the NADPH-dependent reduction of glutamyl-tRNA(Glu) to glutamate 1-semialdehyde (GSA). The protein is Glutamyl-tRNA reductase of Kocuria rhizophila (strain ATCC 9341 / DSM 348 / NBRC 103217 / DC2201).